Consider the following 954-residue polypeptide: Glycine dehydrogenase (decarboxylating) (954 aa).

Lys700 bears the N6-(pyridoxal phosphate)lysine mark.

It belongs to the GcvP family. In terms of assembly, the glycine cleavage system is composed of four proteins: P, T, L and H. It depends on pyridoxal 5'-phosphate as a cofactor.

It catalyses the reaction N(6)-[(R)-lipoyl]-L-lysyl-[glycine-cleavage complex H protein] + glycine + H(+) = N(6)-[(R)-S(8)-aminomethyldihydrolipoyl]-L-lysyl-[glycine-cleavage complex H protein] + CO2. Its function is as follows. The glycine cleavage system catalyzes the degradation of glycine. The P protein binds the alpha-amino group of glycine through its pyridoxal phosphate cofactor; CO(2) is released and the remaining methylamine moiety is then transferred to the lipoamide cofactor of the H protein. This chain is Glycine dehydrogenase (decarboxylating), found in Dinoroseobacter shibae (strain DSM 16493 / NCIMB 14021 / DFL 12).